Consider the following 21-residue polypeptide: Cupiennin-6d (21 aa).

Ser21 is modified (serine amide).

Expressed by the venom gland.

The protein resides in the secreted. The chain is Cupiennin-6d from Cupiennius salei (American wandering spider).